The chain runs to 316 residues: 4-hydroxy-3-methylbut-2-enyl diphosphate reductase (316 aa).

C12 provides a ligand contact to [4Fe-4S] cluster. H41 and H74 together coordinate (2E)-4-hydroxy-3-methylbut-2-enyl diphosphate. Dimethylallyl diphosphate contacts are provided by H41 and H74. Isopentenyl diphosphate contacts are provided by H41 and H74. Residue C96 coordinates [4Fe-4S] cluster. H124 provides a ligand contact to (2E)-4-hydroxy-3-methylbut-2-enyl diphosphate. H124 lines the dimethylallyl diphosphate pocket. H124 is a binding site for isopentenyl diphosphate. The active-site Proton donor is E126. T167 serves as a coordination point for (2E)-4-hydroxy-3-methylbut-2-enyl diphosphate. C197 is a binding site for [4Fe-4S] cluster. 4 residues coordinate (2E)-4-hydroxy-3-methylbut-2-enyl diphosphate: S225, S226, N227, and S269. Dimethylallyl diphosphate is bound by residues S225, S226, N227, and S269. Residues S225, S226, N227, and S269 each coordinate isopentenyl diphosphate.

This sequence belongs to the IspH family. In terms of assembly, homodimer. [4Fe-4S] cluster serves as cofactor.

The enzyme catalyses isopentenyl diphosphate + 2 oxidized [2Fe-2S]-[ferredoxin] + H2O = (2E)-4-hydroxy-3-methylbut-2-enyl diphosphate + 2 reduced [2Fe-2S]-[ferredoxin] + 2 H(+). It catalyses the reaction dimethylallyl diphosphate + 2 oxidized [2Fe-2S]-[ferredoxin] + H2O = (2E)-4-hydroxy-3-methylbut-2-enyl diphosphate + 2 reduced [2Fe-2S]-[ferredoxin] + 2 H(+). The protein operates within isoprenoid biosynthesis; dimethylallyl diphosphate biosynthesis; dimethylallyl diphosphate from (2E)-4-hydroxy-3-methylbutenyl diphosphate: step 1/1. Its pathway is isoprenoid biosynthesis; isopentenyl diphosphate biosynthesis via DXP pathway; isopentenyl diphosphate from 1-deoxy-D-xylulose 5-phosphate: step 6/6. Catalyzes the conversion of 1-hydroxy-2-methyl-2-(E)-butenyl 4-diphosphate (HMBPP) into a mixture of isopentenyl diphosphate (IPP) and dimethylallyl diphosphate (DMAPP). Acts in the terminal step of the DOXP/MEP pathway for isoprenoid precursor biosynthesis. This is 4-hydroxy-3-methylbut-2-enyl diphosphate reductase from Salmonella typhi.